Reading from the N-terminus, the 252-residue chain is 4-formylbenzenesulfonate dehydrogenase TsaC1/TsaC2 (252 aa).

NAD(+) contacts are provided by residues 9 to 36 (IVTG…LVAD) and D62. A substrate-binding site is contributed by S142. Y155 serves as the catalytic Proton acceptor. K159 provides a ligand contact to NAD(+).

This sequence belongs to the short-chain dehydrogenases/reductases (SDR) family. As to quaternary structure, homodimer.

It carries out the reaction 4-formylbenzenesulfonate + NAD(+) + H2O = 4-sulfobenzoate + NADH + 2 H(+). Its function is as follows. Involved in the toluene-4-sulfonate degradation pathway. Does not discriminate between the sulfonate and the carboxyl substituents and can also be involved in the p-toluenecarboxylate degradation pathway. The polypeptide is 4-formylbenzenesulfonate dehydrogenase TsaC1/TsaC2 (tsaC1) (Comamonas testosteroni (Pseudomonas testosteroni)).